Here is a 1335-residue protein sequence, read N- to C-terminus: Aldehyde oxidase 2 (1335 aa).

Residues 8–95 (DVLVFFVNGR…GAAVTTVEGV (88 aa)) enclose the 2Fe-2S ferredoxin-type domain. Residues Cys-47, Cys-52, Cys-55, and Cys-77 each contribute to the [2Fe-2S] cluster site. A Mo-molybdopterin-binding site is contributed by Gln-116. Residues Cys-117, Cys-120, Cys-152, and Cys-154 each coordinate [2Fe-2S] cluster. Residue Cys-154 participates in Mo-molybdopterin binding. Positions 242–427 (FRGDRVTWVS…ESVHIPHSQK (186 aa)) constitute an FAD-binding PCMH-type domain. FAD contacts are provided by residues 270-277 (LVLGNTAL), Ala-351, Ser-360, His-364, Asp-373, and Leu-417. Residues 821 to 822 (GF), 1103 to 1106 (ASVG), Gln-1218, and Leu-1285 each bind Mo-molybdopterin. The active-site Proton acceptor; for azaheterocycle hydroxylase activity is Glu-1287.

It belongs to the xanthine dehydrogenase family. Homodimer. Requires [2Fe-2S] cluster as cofactor. FAD serves as cofactor. It depends on Mo-molybdopterin as a cofactor. Detected in kidney, Harderian gland and olfactory mucosa.

The protein localises to the cytoplasm. It carries out the reaction an aldehyde + O2 + H2O = a carboxylate + H2O2 + H(+). Oxidase with broad substrate specificity, oxidizing aromatic azaheterocycles, such as phthalazine, as well as aldehydes, such as benzaldehyde and retinal. This is Aldehyde oxidase 2 (AOX2) from Cavia porcellus (Guinea pig).